Reading from the N-terminus, the 260-residue chain is Translation initiation factor 2 subunit alpha (260 aa).

An S1 motif domain is found at Gly-12–Lys-83.

This sequence belongs to the eIF-2-alpha family. As to quaternary structure, heterotrimer composed of an alpha, a beta and a gamma chain.

EIF-2 functions in the early steps of protein synthesis by forming a ternary complex with GTP and initiator tRNA. This is Translation initiation factor 2 subunit alpha from Methanosphaera stadtmanae (strain ATCC 43021 / DSM 3091 / JCM 11832 / MCB-3).